The following is a 266-amino-acid chain: Undecaprenyl-diphosphatase (266 aa).

8 helical membrane passes run 1-21 (MDTF…FLPI), 39-59 (QGLS…VIYF), 87-107 (WWII…KDFI), 114-134 (AEVI…ADKM), 149-169 (ALLI…RSGA), 183-203 (AAAR…AILV), 218-238 (ALIL…HYFL), and 246-266 (MTPF…FIFF).

The protein belongs to the UppP family.

Its subcellular location is the cell inner membrane. The enzyme catalyses di-trans,octa-cis-undecaprenyl diphosphate + H2O = di-trans,octa-cis-undecaprenyl phosphate + phosphate + H(+). In terms of biological role, catalyzes the dephosphorylation of undecaprenyl diphosphate (UPP). Confers resistance to bacitracin. The sequence is that of Undecaprenyl-diphosphatase from Shewanella baltica (strain OS223).